A 195-amino-acid chain; its full sequence is Dephospho-CoA kinase (195 aa).

The 192-residue stretch at 4–195 (IIGLTGGIAS…EQILDALQRL (192 aa)) folds into the DPCK domain. Residue 12–17 (ASGKST) participates in ATP binding.

This sequence belongs to the CoaE family.

It is found in the cytoplasm. It catalyses the reaction 3'-dephospho-CoA + ATP = ADP + CoA + H(+). The protein operates within cofactor biosynthesis; coenzyme A biosynthesis; CoA from (R)-pantothenate: step 5/5. Catalyzes the phosphorylation of the 3'-hydroxyl group of dephosphocoenzyme A to form coenzyme A. This Streptococcus agalactiae serotype III (strain NEM316) protein is Dephospho-CoA kinase.